Reading from the N-terminus, the 332-residue chain is NADH-quinone oxidoreductase subunit H (332 aa).

9 helical membrane passes run I8–F28, I44–A66, P78–I98, V120–G140, I157–I177, W196–L216, M245–F265, F274–W294, and W312–F332.

This sequence belongs to the complex I subunit 1 family. As to quaternary structure, NDH-1 is composed of 14 different subunits. Subunits NuoA, H, J, K, L, M, N constitute the membrane sector of the complex.

Its subcellular location is the cell inner membrane. It carries out the reaction a quinone + NADH + 5 H(+)(in) = a quinol + NAD(+) + 4 H(+)(out). Its function is as follows. NDH-1 shuttles electrons from NADH, via FMN and iron-sulfur (Fe-S) centers, to quinones in the respiratory chain. The immediate electron acceptor for the enzyme in this species is believed to be ubiquinone. Couples the redox reaction to proton translocation (for every two electrons transferred, four hydrogen ions are translocated across the cytoplasmic membrane), and thus conserves the redox energy in a proton gradient. This subunit may bind ubiquinone. In Helicobacter hepaticus (strain ATCC 51449 / 3B1), this protein is NADH-quinone oxidoreductase subunit H.